A 650-amino-acid polypeptide reads, in one-letter code: Probable E3 ubiquitin ligase complex SCF subunit scon-2 (650 aa).

The F-box domain occupies 124-170 (IDFISALPVELAQKVLCYLDTVSLTKAAQVSQRWRTLADSDAVWVRM). Residues 200–244 (QRQLAKGGPQGRVTELADSHDSQDRSVNQHGKRPAAEAEEEDPIK) form a disordered region. The span at 214–223 (ELADSHDSQD) shows a compositional bias: basic and acidic residues. WD repeat units follow at residues 292–320 (GHEN…KIWN), 332–360 (GHTA…KVWN), 372–400 (AHTD…KIFD), 411–441 (GHSD…KLWD), and 453–488 (GHVG…AMSV). Residues 482-525 (NQDAMSVSSGGSGSPSMSHAQIERAGSPGSHSSSHNLLPSSLPS) form a disordered region. 2 stretches are compositionally biased toward low complexity: residues 487–499 (SVSS…PSMS) and 507–525 (GSPG…SLPS). WD repeat units follow at residues 528–564 (EDVR…RLWD), 576–604 (GHLE…KTWE), and 616–644 (GHCG…RLHS).

Belongs to the WD repeat MET30/SCONB/SCON-2 family. In terms of assembly, component of the SCF(scon-2) E3 ubiquitin ligase complex.

It functions in the pathway protein modification; protein ubiquitination. Its function is as follows. Component of the SCF(scon-2) E3 ubiquitin ligase complex involved in the regulation of sulfur metabolite repression, probably by mediating the inactivation or degradation of the metR transcription factor. This is Probable E3 ubiquitin ligase complex SCF subunit scon-2 (scon-2) from Neurospora crassa (strain ATCC 24698 / 74-OR23-1A / CBS 708.71 / DSM 1257 / FGSC 987).